The sequence spans 325 residues: Acetyl-coenzyme A carboxylase carboxyl transferase subunit alpha (325 aa).

In terms of domain architecture, CoA carboxyltransferase C-terminal spans 38–292 (KLEKRLHALE…DQVLEKSLKQ (255 aa)).

This sequence belongs to the AccA family. In terms of assembly, acetyl-CoA carboxylase is a heterohexamer composed of biotin carboxyl carrier protein (AccB), biotin carboxylase (AccC) and two subunits each of ACCase subunit alpha (AccA) and ACCase subunit beta (AccD).

The protein localises to the cytoplasm. The catalysed reaction is N(6)-carboxybiotinyl-L-lysyl-[protein] + acetyl-CoA = N(6)-biotinyl-L-lysyl-[protein] + malonyl-CoA. Its pathway is lipid metabolism; malonyl-CoA biosynthesis; malonyl-CoA from acetyl-CoA: step 1/1. Functionally, component of the acetyl coenzyme A carboxylase (ACC) complex. First, biotin carboxylase catalyzes the carboxylation of biotin on its carrier protein (BCCP) and then the CO(2) group is transferred by the carboxyltransferase to acetyl-CoA to form malonyl-CoA. This chain is Acetyl-coenzyme A carboxylase carboxyl transferase subunit alpha, found in Halalkalibacterium halodurans (strain ATCC BAA-125 / DSM 18197 / FERM 7344 / JCM 9153 / C-125) (Bacillus halodurans).